The sequence spans 151 residues: Acidic phospholipase A2 3 (151 aa).

The first 27 residues, 1-27 (MYPAHLLVLLAVCVSLLGAASIPARPL), serve as a signal peptide directing secretion. Intrachain disulfides connect Cys-38–Cys-104, Cys-54–Cys-151, Cys-56–Cys-72, Cys-71–Cys-132, Cys-78–Cys-125, Cys-88–Cys-118, and Cys-111–Cys-123. 3 residues coordinate Ca(2+): Tyr-55, Gly-57, and Gly-59. His-75 is an active-site residue. Ca(2+) is bound at residue Asp-76. Asp-126 is a catalytic residue.

It belongs to the phospholipase A2 family. Group I subfamily. D49 sub-subfamily. It depends on Ca(2+) as a cofactor. Expressed by the venom gland.

It is found in the secreted. It catalyses the reaction a 1,2-diacyl-sn-glycero-3-phosphocholine + H2O = a 1-acyl-sn-glycero-3-phosphocholine + a fatty acid + H(+). In terms of biological role, PLA2 catalyzes the calcium-dependent hydrolysis of the 2-acyl groups in 3-sn-phosphoglycerides. In Tropidechis carinatus (Australian rough-scaled snake), this protein is Acidic phospholipase A2 3.